We begin with the raw amino-acid sequence, 439 residues long: Phosphomethylpyrimidine synthase (439 aa).

Substrate is bound by residues N67, M96, Y126, H165, 187-189 (SRG), 228-231 (DSLR), and E267. H271 serves as a coordination point for Zn(2+). Position 294 (Y294) interacts with substrate. Residue H335 participates in Zn(2+) binding. [4Fe-4S] cluster-binding residues include C411, C414, and C418.

It belongs to the ThiC family. The cofactor is [4Fe-4S] cluster.

It carries out the reaction 5-amino-1-(5-phospho-beta-D-ribosyl)imidazole + S-adenosyl-L-methionine = 4-amino-2-methyl-5-(phosphooxymethyl)pyrimidine + CO + 5'-deoxyadenosine + formate + L-methionine + 3 H(+). It participates in cofactor biosynthesis; thiamine diphosphate biosynthesis. Catalyzes the synthesis of the hydroxymethylpyrimidine phosphate (HMP-P) moiety of thiamine from aminoimidazole ribotide (AIR) in a radical S-adenosyl-L-methionine (SAM)-dependent reaction. In Ignicoccus hospitalis (strain KIN4/I / DSM 18386 / JCM 14125), this protein is Phosphomethylpyrimidine synthase.